A 472-amino-acid polypeptide reads, in one-letter code: 3-isopropylmalate dehydratase large subunit (472 aa).

[4Fe-4S] cluster-binding residues include cysteine 347, cysteine 407, and cysteine 410.

Belongs to the aconitase/IPM isomerase family. LeuC type 1 subfamily. In terms of assembly, heterodimer of LeuC and LeuD. It depends on [4Fe-4S] cluster as a cofactor.

The enzyme catalyses (2R,3S)-3-isopropylmalate = (2S)-2-isopropylmalate. It functions in the pathway amino-acid biosynthesis; L-leucine biosynthesis; L-leucine from 3-methyl-2-oxobutanoate: step 2/4. Its function is as follows. Catalyzes the isomerization between 2-isopropylmalate and 3-isopropylmalate, via the formation of 2-isopropylmaleate. This Synechococcus sp. (strain CC9605) protein is 3-isopropylmalate dehydratase large subunit.